We begin with the raw amino-acid sequence, 232 residues long: Thiamine import ATP-binding protein ThiQ (232 aa).

Positions 2-230 (LKLTDITWLY…KASASALLGI (229 aa)) constitute an ABC transporter domain. An ATP-binding site is contributed by 32–39 (GPSGAGKS).

This sequence belongs to the ABC transporter superfamily. Thiamine importer (TC 3.A.1.19.1) family. The complex is composed of two ATP-binding proteins (ThiQ), two transmembrane proteins (ThiP) and a solute-binding protein (ThiB).

The protein localises to the cell inner membrane. It carries out the reaction thiamine(out) + ATP + H2O = thiamine(in) + ADP + phosphate + H(+). In terms of biological role, part of the ABC transporter complex ThiBPQ involved in thiamine import. Responsible for energy coupling to the transport system. In Escherichia coli (strain UTI89 / UPEC), this protein is Thiamine import ATP-binding protein ThiQ.